A 100-amino-acid polypeptide reads, in one-letter code: EKC/KEOPS complex subunit GON7 (100 aa).

Met1 bears the N-acetylmethionine mark. Residues 61–100 (AAAPDEDLDGDDEDDAEDENNIDNRTNFDGPSAKRPKTPS) are disordered. Acidic residues predominate over residues 64–81 (PDEDLDGDDEDDAEDENN).

As to quaternary structure, component of the EKC/KEOPS complex composed of at least GON7, TP53RK, TPRKB, OSGEP and LAGE3; the whole complex dimerizes.

It localises to the nucleus. Component of the EKC/KEOPS complex that is required for the formation of a threonylcarbamoyl group on adenosine at position 37 (t(6)A37) in tRNAs that read codons beginning with adenine. The complex is probably involved in the transfer of the threonylcarbamoyl moiety of threonylcarbamoyl-AMP (TC-AMP) to the N6 group of A37. GON7 plays a supporting role to the catalytic subunit OSGEP in the complex. The sequence is that of EKC/KEOPS complex subunit GON7 from Homo sapiens (Human).